Reading from the N-terminus, the 357-residue chain is MSSLSDLINFNLSDSTEKIIAEYIWVGGSGIDIRSKARTLPGPVSDPAKLPKWNYDGSSTDQAPGKDSEVILYPQAIFKDPFRRGNNILVICDVYTPAGEPLPTNKRYNAAKIFSHPDVAAEVPWYGIEQEYTLLQKDINWPLGWPIGGYPGKQGPYYCGIGADKAYGRDIVDAHYKACLFAGINISGINGEVMPGQWEFQVGPSVGISAGDEIWAARYILERITEISGVVVSFDPKPIPGDWNGAGAHANFSTKSMRENGGYEVIKKAIEKLGLRHKEHIAAYGEGNERRLTGKHETADINVFSWGVANRGSSIRVGRDTEKDGKGYFEDRRPASNMDPYVVTSMIAETTILWKKS.

The GS beta-grasp domain occupies 19-99 (IIAEYIWVGG…VICDVYTPAG (81 aa)). The GS catalytic domain occupies 106–357 (KRYNAAKIFS…AETTILWKKS (252 aa)).

The protein belongs to the glutamine synthetase family. In terms of assembly, homooctamer.

The protein localises to the cytoplasm. It catalyses the reaction L-glutamate + NH4(+) + ATP = L-glutamine + ADP + phosphate + H(+). The protein is Glutamine synthetase root isozyme B (GS3B) of Pisum sativum (Garden pea).